The sequence spans 282 residues: Bifunctional protein FolD (282 aa).

Residues 165 to 167, Ser-190, and Ile-231 each bind NADP(+); that span reads NRS.

It belongs to the tetrahydrofolate dehydrogenase/cyclohydrolase family. In terms of assembly, homodimer.

The enzyme catalyses (6R)-5,10-methylene-5,6,7,8-tetrahydrofolate + NADP(+) = (6R)-5,10-methenyltetrahydrofolate + NADPH. The catalysed reaction is (6R)-5,10-methenyltetrahydrofolate + H2O = (6R)-10-formyltetrahydrofolate + H(+). It functions in the pathway one-carbon metabolism; tetrahydrofolate interconversion. Its function is as follows. Catalyzes the oxidation of 5,10-methylenetetrahydrofolate to 5,10-methenyltetrahydrofolate and then the hydrolysis of 5,10-methenyltetrahydrofolate to 10-formyltetrahydrofolate. The sequence is that of Bifunctional protein FolD from Clostridium botulinum (strain ATCC 19397 / Type A).